The following is a 390-amino-acid chain: Cold-responsive protein kinase 1 (390 aa).

Residues 41 to 320 (FSAENKIGEG…VRLLTGEKDI (280 aa)) form the Protein kinase domain. Residues 47–55 (IGEGGFGSV) and Lys-69 contribute to the ATP site. Tyr-114 bears the Phosphotyrosine mark. Asp-169 acts as the Proton acceptor in catalysis. A phosphoserine mark is found at Ser-173 and Ser-202. Phosphothreonine is present on residues Thr-203 and Thr-208. Position 216 is a phosphotyrosine (Tyr-216). A disordered region spans residues 345–390 (TKTEQVNRQNYTNPSSSSNGSSRDHSNAYSSGASSANAGNTFSSTI). Over residues 354–390 (NYTNPSSSSNGSSRDHSNAYSSGASSANAGNTFSSTI) the composition is skewed to low complexity.

Belongs to the protein kinase superfamily. Ser/Thr protein kinase family. In terms of assembly, interacts with and phosphorylates 14-3-3 proteins. Binds to GRF6 at the plasma membrane. Autophosphorylated.

Its subcellular location is the cell membrane. The catalysed reaction is L-seryl-[protein] + ATP = O-phospho-L-seryl-[protein] + ADP + H(+). The enzyme catalyses L-threonyl-[protein] + ATP = O-phospho-L-threonyl-[protein] + ADP + H(+). Activated by cold. Negative regulator of freezing tolerance that phosphorylates 14-3-3 proteins (e.g. GRF6) thus triggering their translocation from the cytosol to the nucleus in response to cold stress. The protein is Cold-responsive protein kinase 1 of Arabidopsis thaliana (Mouse-ear cress).